A 139-amino-acid chain; its full sequence is Histone H2B (139 aa).

A compositionally biased stretch (basic and acidic residues) spans 1-10 (MAPKVAEKKP). Residues 1–47 (MAPKVAEKKPSLAGKAPAGKAPAEKKEAGKKTTTATGEKKKRTKARK) are disordered. Residues lysine 8 and lysine 9 each carry the N6-acetyllysine; alternate modification. Glycyl lysine isopeptide (Lys-Gly) (interchain with G-Cter in SUMO); alternate cross-links involve residues lysine 8 and lysine 9. Lysine 15 bears the N6-acetyllysine mark. Position 25 is an N6-acetyllysine; alternate (lysine 25). A Glycyl lysine isopeptide (Lys-Gly) (interchain with G-Cter in SUMO); alternate cross-link involves residue lysine 25. A Glycyl lysine isopeptide (Lys-Gly) (interchain with G-Cter in SUMO) cross-link involves residue lysine 26. Lysine 133 is covalently cross-linked (Glycyl lysine isopeptide (Lys-Gly) (interchain with G-Cter in ubiquitin)).

The protein belongs to the histone H2B family. The nucleosome is a histone octamer containing two molecules each of H2A, H2B, H3 and H4 assembled in one H3-H4 heterotetramer and two H2A-H2B heterodimers. The octamer wraps approximately 147 bp of DNA. Post-translationally, monoubiquitinated by the UBC2-BRE1 complex to form H2BK123ub1. H2BK123ub1 gives a specific tag for epigenetic transcriptional activation and is also prerequisite for H3K4me and H3K79me formation. H2BK123ub1 also modulates the formation of double-strand breaks during meiosis and is a prerequisite for DNA-damage checkpoint activation. Acetylated by GCN5 to form H2BK11ac and H2BK16ac. H2BK16ac can also be formed by ESA1. Acetylation of N-terminal lysines and particularly formation of H2BK11acK16ac has a positive effect on transcription. In terms of processing, sumoylation to form H2BK6su or H2BK7su, and probably also H2BK16su or H2BK17su, occurs preferentially near the telomeres and represses gene transcription.

The protein localises to the nucleus. The protein resides in the chromosome. In terms of biological role, core component of nucleosome. Nucleosomes wrap and compact DNA into chromatin, limiting DNA accessibility to the cellular machineries which require DNA as a template. Histones thereby play a central role in transcription regulation, DNA repair, DNA replication and chromosomal stability. DNA accessibility is regulated via a complex set of post-translational modifications of histones, also called histone code, and nucleosome remodeling. The sequence is that of Histone H2B (HTB1) from Yarrowia lipolytica (strain CLIB 122 / E 150) (Yeast).